The sequence spans 299 residues: Ciliary microtubule inner protein 2B (299 aa).

This sequence belongs to the CIMIP2 family. As to expression, expressed in airway epithelial cells.

Its subcellular location is the cytoplasm. The protein resides in the cytoskeleton. It is found in the cilium axoneme. Functionally, microtubule inner protein (MIP) part of the dynein-decorated doublet microtubules (DMTs) in cilia axoneme, which is required for motile cilia beating. This Danio rerio (Zebrafish) protein is Ciliary microtubule inner protein 2B (cimip2b).